Consider the following 294-residue polypeptide: tRNA dimethylallyltransferase (294 aa).

11 to 18 provides a ligand contact to ATP; the sequence is GPTAVGKT. 13 to 18 is a substrate binding site; sequence TAVGKT. Residues 36 to 39 form an interaction with substrate tRNA region; sequence DSQQ.

Belongs to the IPP transferase family. As to quaternary structure, monomer. Mg(2+) serves as cofactor.

The catalysed reaction is adenosine(37) in tRNA + dimethylallyl diphosphate = N(6)-dimethylallyladenosine(37) in tRNA + diphosphate. Catalyzes the transfer of a dimethylallyl group onto the adenine at position 37 in tRNAs that read codons beginning with uridine, leading to the formation of N6-(dimethylallyl)adenosine (i(6)A). This is tRNA dimethylallyltransferase from Lactococcus lactis subsp. cremoris (strain MG1363).